Reading from the N-terminus, the 472-residue chain is Cannabinoid receptor 1 (472 aa).

Residues 1–116 (MKSILDGLAD…CFMILNPSQQ (116 aa)) lie on the Extracellular side of the membrane. Residues 2–23 (KSILDGLADTTFRTITTDLLYV) form a required for mitochondrial localization region. N-linked (GlcNAc...) asparagine glycans are attached at residues asparagine 77 and asparagine 83. Residues 117–142 (LAIAVLSLTLGTFTVLENLLVLCVIL) traverse the membrane as a helical segment. The Cytoplasmic segment spans residues 143–154 (HSRSLRCRPSYH). Residues 155–175 (FIGSLAVADLLGSVIFVYSFV) form a helical membrane-spanning segment. Over 176–187 (DFHVFHRKDSPN) the chain is Extracellular. Residues 188–212 (VFLFKLGGVTASFTASVGSLFLTAI) traverse the membrane as a helical segment. Topologically, residues 213-232 (DRYISIHRPLAYKKIVTRPK) are cytoplasmic. Residues 233 to 255 (AVVAFCLMWTIAIVIAVLPLLGW) traverse the membrane as a helical segment. Residues 256 to 273 (NCKKLQSVCSDIFPLIDE) are Extracellular-facing. Residues 274–299 (TYLMFWIGVTSVLLLFIVYAYMYILW) traverse the membrane as a helical segment. Residues 300–344 (KAHIHAVRMIQRGTQKSIIIHTSEDGKVQVTRPDQARMDIRLAKT) are Cytoplasmic-facing. The chain crosses the membrane as a helical span at residues 345–365 (LVLILVVLIICWGPLLAIMVY). The Extracellular portion of the chain corresponds to 366–377 (DVFGKMNKLIKT). The helical transmembrane segment at 378-399 (VFAFCSMLCLLNSTVNPIIYAL) threads the bilayer. At 400-472 (RSKDLRHAFR…VSTNTSAKAL (73 aa)) the chain is on the cytoplasmic side. Residue cysteine 415 is the site of S-palmitoyl cysteine attachment. Phosphoserine is present on residues serine 425 and serine 429.

The protein belongs to the G-protein coupled receptor 1 family. As to quaternary structure, interacts (via C-terminus) with CNRIP1; this interaction attenuates constitutive, but not agonist-dependent, inhibition of voltage-gated Ca(2+) channels in neurons. Associates with G protein alpha subunits, including G(i) alpha-1/GNAI1, G(i) alpha-3/GNAI3 and G(o)-alpha/GNAO1; palmitoylation is important for interaction with GNAI3 and GNAO1. Palmitoylation at Cys-415 is important for recruitment at plasma membrane and lipid rafts and association with G protein alpha subunits. In terms of tissue distribution, expressed in cerebral arterial muscle cells and cerebral cortex (at protein level).

It is found in the cell membrane. The protein resides in the membrane raft. Its subcellular location is the mitochondrion outer membrane. The protein localises to the cell projection. It localises to the axon. It is found in the presynapse. Hemopressin, a peptide derived from hemoglobin subunit alpha (HBA1 and/or HBA2), acts as an antagonist peptide: hemopressin-binding efficiently blocks cannabinoid receptor CNR1 and subsequent signaling. G-protein coupled receptor for endogenous cannabinoids (eCBs), including N-arachidonoylethanolamide (also called anandamide or AEA) and 2-arachidonoylglycerol (2-AG), as well as phytocannabinoids, such as delta(9)-tetrahydrocannabinol (THC). Mediates many cannabinoid-induced effects, acting, among others, on food intake, memory loss, gastrointestinal motility, catalepsy, ambulatory activity, anxiety, chronic pain. Signaling typically involves reduction in cyclic AMP. In the hypothalamus, may have a dual effect on mitochondrial respiration depending upon the agonist dose and possibly upon the cell type. Increases respiration at low doses, while decreases respiration at high doses. At high doses, CNR1 signal transduction involves G-protein alpha-i protein activation and subsequent inhibition of mitochondrial soluble adenylate cyclase, decrease in cyclic AMP concentration, inhibition of protein kinase A (PKA)-dependent phosphorylation of specific subunits of the mitochondrial electron transport system, including NDUFS2. In the hypothalamus, inhibits leptin-induced reactive oxygen species (ROS) formation and mediates cannabinoid-induced increase in SREBF1 and FASN gene expression. In response to cannabinoids, drives the release of orexigenic beta-endorphin, not that of melanocyte-stimulating hormone alpha/alpha-MSH, from hypothalamic POMC neurons, hence promoting food intake. In the hippocampus, regulates cellular respiration and energy production in response to cannabinoids. Involved in cannabinoid-dependent depolarization-induced suppression of inhibition (DSI), a process in which depolarization of CA1 postsynaptic pyramidal neurons mobilizes eCBs, which retrogradely activate presynaptic CB1 receptors, transiently decreasing GABAergic inhibitory neurotransmission. Also reduces excitatory synaptic transmission. In superior cervical ganglions and cerebral vascular smooth muscle cells, inhibits voltage-gated Ca(2+) channels in a constitutive, as well as agonist-dependent manner. In cerebral vascular smooth muscle cells, inhibition of voltage-gated Ca(2+) channels leads to vasodilation and decrease in vascular tone. Induces leptin production in adipocytes and reduces LRP2-mediated leptin clearance in the kidney, hence participating in hyperleptinemia. In adipose tissue, CNR1 signaling leads to increased expression of SREBF1, ACACA and FASN genes. In the liver, activation by endocannabinoids leads to increased de novo lipogenesis and reduced fatty acid catabolism, associated with increased expression of SREBF1/SREBP-1, GCK, ACACA, ACACB and FASN genes. May also affect de novo cholesterol synthesis and HDL-cholesteryl ether uptake. Peripherally modulates energy metabolism. In high carbohydrate diet-induced obesity, may decrease the expression of mitochondrial dihydrolipoyl dehydrogenase/DLD in striated muscles, as well as that of selected glucose/ pyruvate metabolic enzymes, hence affecting energy expenditure through mitochondrial metabolism. In response to cannabinoid anandamide, elicits a pro-inflammatory response in macrophages, which involves NLRP3 inflammasome activation and IL1B and IL18 secretion. In macrophages infiltrating pancreatic islets, this process may participate in the progression of type-2 diabetes and associated loss of pancreatic beta-cells. In Felis catus (Cat), this protein is Cannabinoid receptor 1 (CNR1).